A 448-amino-acid polypeptide reads, in one-letter code: Putative F-box/LRR-repeat protein At3g44810 (448 aa).

An F-box domain is found at Thr6–Ser54. LRR repeat units follow at residues Val117 to Ser141, Thr143 to Pro165, Cys190 to Lys213, Phe228 to Arg251, Val290 to Gly313, and Ile421 to Leu443.

The protein is Putative F-box/LRR-repeat protein At3g44810 of Arabidopsis thaliana (Mouse-ear cress).